A 406-amino-acid polypeptide reads, in one-letter code: Arginine biosynthesis bifunctional protein ArgJ (406 aa).

Residues Thr152, Lys179, Thr190, Glu277, Asn401, and Ser406 each coordinate substrate. Thr190 acts as the Nucleophile in catalysis.

The protein belongs to the ArgJ family. Heterotetramer of two alpha and two beta chains.

The protein resides in the cytoplasm. It catalyses the reaction N(2)-acetyl-L-ornithine + L-glutamate = N-acetyl-L-glutamate + L-ornithine. It carries out the reaction L-glutamate + acetyl-CoA = N-acetyl-L-glutamate + CoA + H(+). Its pathway is amino-acid biosynthesis; L-arginine biosynthesis; L-ornithine and N-acetyl-L-glutamate from L-glutamate and N(2)-acetyl-L-ornithine (cyclic): step 1/1. It functions in the pathway amino-acid biosynthesis; L-arginine biosynthesis; N(2)-acetyl-L-ornithine from L-glutamate: step 1/4. In terms of biological role, catalyzes two activities which are involved in the cyclic version of arginine biosynthesis: the synthesis of N-acetylglutamate from glutamate and acetyl-CoA as the acetyl donor, and of ornithine by transacetylation between N(2)-acetylornithine and glutamate. The sequence is that of Arginine biosynthesis bifunctional protein ArgJ from Neisseria gonorrhoeae.